A 318-amino-acid chain; its full sequence is Transcription factor FER-LIKE IRON DEFICIENCY-INDUCED TRANSCRIPTION FACTOR (318 aa).

A disordered region spans residues 90–138 (FDGDSVRAGGEEDEEDYNDGDDSSATTTNNDGTRKTKTDRSRTLISERR). The span at 100–111 (EEDEEDYNDGDD) shows a compositional bias: acidic residues. A compositionally biased stretch (basic and acidic residues) spans 121–136 (GTRKTKTDRSRTLISE). The bHLH domain maps to 127–176 (TDRSRTLISERRRRGRMKDKLYALRSLVPNITKMDKASIVGDAVLYVQEL).

Homodimer. In terms of tissue distribution, expressed in roots and inflorescence, and to a lower extent, in leaves and stems. In roots, confined to the outer cell layers, specifically in the differentiation zone. Also detected in the endodermis and inner tissues of the central cylinder.

The protein localises to the nucleus. Functionally, transcription factor. Essential protein involved in iron uptake responses. Regulates FRO2 at the level of mRNA accumulation and IRT1 at the level of protein accumulation. Confers enhanced iron mobilization responses at low iron supply. The chain is Transcription factor FER-LIKE IRON DEFICIENCY-INDUCED TRANSCRIPTION FACTOR (FIT) from Arabidopsis thaliana (Mouse-ear cress).